Reading from the N-terminus, the 490-residue chain is Glutamyl-tRNA(Gln) amidotransferase subunit A (490 aa).

Catalysis depends on charge relay system residues Lys-81 and Ser-156. The active-site Acyl-ester intermediate is Ser-180.

It belongs to the amidase family. GatA subfamily. As to quaternary structure, heterotrimer of A, B and C subunits.

It catalyses the reaction L-glutamyl-tRNA(Gln) + L-glutamine + ATP + H2O = L-glutaminyl-tRNA(Gln) + L-glutamate + ADP + phosphate + H(+). Its function is as follows. Allows the formation of correctly charged Gln-tRNA(Gln) through the transamidation of misacylated Glu-tRNA(Gln) in organisms which lack glutaminyl-tRNA synthetase. The reaction takes place in the presence of glutamine and ATP through an activated gamma-phospho-Glu-tRNA(Gln). The protein is Glutamyl-tRNA(Gln) amidotransferase subunit A of Nocardia farcinica (strain IFM 10152).